Consider the following 89-residue polypeptide: Small ribosomal subunit protein uS17 (89 aa).

This sequence belongs to the universal ribosomal protein uS17 family. Part of the 30S ribosomal subunit.

In terms of biological role, one of the primary rRNA binding proteins, it binds specifically to the 5'-end of 16S ribosomal RNA. The chain is Small ribosomal subunit protein uS17 from Delftia acidovorans (strain DSM 14801 / SPH-1).